Here is a 75-residue protein sequence, read N- to C-terminus: Antimicrobial peptide Meucin-49-1 (75 aa).

A signal peptide spans 1-22; it reads MNKKILLVIFIVTMLIVDEVNS.

The protein belongs to the non-disulfide-bridged peptide (NDBP) superfamily. Long chain multifunctional peptide (group 2) family. As to expression, expressed by the venom gland.

It is found in the secreted. In terms of biological role, antimicrobial peptide. This chain is Antimicrobial peptide Meucin-49-1, found in Mesobuthus eupeus (Lesser Asian scorpion).